The primary structure comprises 386 residues: DNA-directed RNA polymerase subunit Rpo1C (386 aa).

Belongs to the RNA polymerase beta' chain family. Part of the RNA polymerase complex.

The protein resides in the cytoplasm. The catalysed reaction is RNA(n) + a ribonucleoside 5'-triphosphate = RNA(n+1) + diphosphate. DNA-dependent RNA polymerase (RNAP) catalyzes the transcription of DNA into RNA using the four ribonucleoside triphosphates as substrates. Forms part of the jaw domain. This is DNA-directed RNA polymerase subunit Rpo1C from Methanococcus maripaludis (strain C5 / ATCC BAA-1333).